The following is a 187-amino-acid chain: Adenylate kinase (187 aa).

An ATP-binding site is contributed by 10–15 (GSGKGT). Residues 30–59 (STGDLLRAEVAAGSPLGVKAKEVMARGDLV) form an NMP region. AMP is bound by residues Thr31, Arg36, 57 to 59 (DLV), 85 to 88 (GYPR), and Gln92. An LID region spans residues 126-136 (GRAKAEGREDD). Arg127 is an ATP binding site. Residues Arg133 and Arg144 each coordinate AMP. Residue Gly172 participates in ATP binding.

It belongs to the adenylate kinase family. As to quaternary structure, monomer.

It is found in the cytoplasm. The enzyme catalyses AMP + ATP = 2 ADP. It participates in purine metabolism; AMP biosynthesis via salvage pathway; AMP from ADP: step 1/1. Functionally, catalyzes the reversible transfer of the terminal phosphate group between ATP and AMP. Plays an important role in cellular energy homeostasis and in adenine nucleotide metabolism. This Xanthomonas campestris pv. campestris (strain B100) protein is Adenylate kinase.